We begin with the raw amino-acid sequence, 51 residues long: uncharacterized protein (51 aa).

This is an uncharacterized protein from Bacillus subtilis (strain 168).